The sequence spans 379 residues: Cobalt-precorrin-5B C(1)-methyltransferase (379 aa).

It belongs to the CbiD family.

The enzyme catalyses Co-precorrin-5B + S-adenosyl-L-methionine = Co-precorrin-6A + S-adenosyl-L-homocysteine. Its pathway is cofactor biosynthesis; adenosylcobalamin biosynthesis; cob(II)yrinate a,c-diamide from sirohydrochlorin (anaerobic route): step 6/10. Functionally, catalyzes the methylation of C-1 in cobalt-precorrin-5B to form cobalt-precorrin-6A. In Cyanothece sp. (strain PCC 7425 / ATCC 29141), this protein is Cobalt-precorrin-5B C(1)-methyltransferase.